The sequence spans 280 residues: Putative pyruvate, phosphate dikinase regulatory protein (280 aa).

149-156 (GVSRSSKT) lines the ADP pocket.

The protein belongs to the pyruvate, phosphate/water dikinase regulatory protein family. PDRP subfamily.

The catalysed reaction is N(tele)-phospho-L-histidyl/L-threonyl-[pyruvate, phosphate dikinase] + ADP = N(tele)-phospho-L-histidyl/O-phospho-L-threonyl-[pyruvate, phosphate dikinase] + AMP + H(+). The enzyme catalyses N(tele)-phospho-L-histidyl/O-phospho-L-threonyl-[pyruvate, phosphate dikinase] + phosphate + H(+) = N(tele)-phospho-L-histidyl/L-threonyl-[pyruvate, phosphate dikinase] + diphosphate. Functionally, bifunctional serine/threonine kinase and phosphorylase involved in the regulation of the pyruvate, phosphate dikinase (PPDK) by catalyzing its phosphorylation/dephosphorylation. The protein is Putative pyruvate, phosphate dikinase regulatory protein of Novosphingobium aromaticivorans (strain ATCC 700278 / DSM 12444 / CCUG 56034 / CIP 105152 / NBRC 16084 / F199).